The chain runs to 492 residues: N-succinylglutamate 5-semialdehyde dehydrogenase (492 aa).

Residue 220-225 (GSASTG) participates in NAD(+) binding. Active-site residues include Glu-243 and Cys-277.

The protein belongs to the aldehyde dehydrogenase family. AstD subfamily.

The enzyme catalyses N-succinyl-L-glutamate 5-semialdehyde + NAD(+) + H2O = N-succinyl-L-glutamate + NADH + 2 H(+). It participates in amino-acid degradation; L-arginine degradation via AST pathway; L-glutamate and succinate from L-arginine: step 4/5. In terms of biological role, catalyzes the NAD-dependent reduction of succinylglutamate semialdehyde into succinylglutamate. The protein is N-succinylglutamate 5-semialdehyde dehydrogenase of Salmonella paratyphi A (strain AKU_12601).